Here is a 377-residue protein sequence, read N- to C-terminus: GTP 3',8-cyclase (377 aa).

The tract at residues 1 to 29 (MTTRLYLSPTPPRNDREGASKSTSASIKH) is disordered. The region spanning 45 to 271 (RFGRIARDLR…FTLSPAKEPR (227 aa)) is the Radical SAM core domain. A GTP-binding site is contributed by arginine 54. Residues cysteine 61 and cysteine 65 each coordinate [4Fe-4S] cluster. An S-adenosyl-L-methionine-binding site is contributed by tyrosine 67. A [4Fe-4S] cluster-binding site is contributed by cysteine 68. Arginine 105 is a binding site for GTP. Residue glycine 109 participates in S-adenosyl-L-methionine binding. Threonine 140 serves as a coordination point for GTP. Residue serine 164 participates in S-adenosyl-L-methionine binding. Lysine 201 contributes to the GTP binding site. Methionine 235 contributes to the S-adenosyl-L-methionine binding site. [4Fe-4S] cluster is bound by residues cysteine 304 and cysteine 307. 309–311 (RSR) provides a ligand contact to GTP. A [4Fe-4S] cluster-binding site is contributed by cysteine 321.

The protein belongs to the radical SAM superfamily. MoaA family. In terms of assembly, monomer and homodimer. It depends on [4Fe-4S] cluster as a cofactor.

The catalysed reaction is GTP + AH2 + S-adenosyl-L-methionine = (8S)-3',8-cyclo-7,8-dihydroguanosine 5'-triphosphate + 5'-deoxyadenosine + L-methionine + A + H(+). It functions in the pathway cofactor biosynthesis; molybdopterin biosynthesis. Functionally, catalyzes the cyclization of GTP to (8S)-3',8-cyclo-7,8-dihydroguanosine 5'-triphosphate. This Corynebacterium glutamicum (strain R) protein is GTP 3',8-cyclase.